The chain runs to 152 residues: Protein NrdI (152 aa).

The protein belongs to the NrdI family.

In terms of biological role, probably involved in ribonucleotide reductase function. The chain is Protein NrdI from Mycolicibacterium vanbaalenii (strain DSM 7251 / JCM 13017 / BCRC 16820 / KCTC 9966 / NRRL B-24157 / PYR-1) (Mycobacterium vanbaalenii).